The chain runs to 1079 residues: Spermatogenesis-associated protein 31G1 (1079 aa).

Disordered regions lie at residues 97–145, 261–281, 297–317, 331–362, 376–412, 506–566, 637–678, and 840–975; these read EVEE…GSEG, EDLEGMAPDPQLLPPPSSPSV, GVLSGAEAPTQSPGTSPLEVL, KMPQAFEPPMPPPCQSPASLSEPRKVSPEGGL, EKPQASESSMPVPCPPLDSLPELQRESSLEDPSRYKP, NLWA…SPPP, VPVF…EQRK, and PHSS…NHPA. Positions 98-113 are enriched in acidic residues; that stretch reads VEEEGEEEEEGEDEAS. Over residues 336–345 the composition is skewed to pro residues; it reads FEPPMPPPCQ. The segment covering 398–412 has biased composition (basic and acidic residues); that stretch reads LQRESSLEDPSRYKP. 2 stretches are compositionally biased toward low complexity: residues 551–562 and 645–655; these read NSSASRSPSLAL and SSPSSNSVSKS. Residues 669–678 show a composition bias toward basic and acidic residues; it reads PDGEAVEQRK. Positions 942–951 are enriched in basic residues; the sequence is AKKREHPRKP.

Dispensable for normal development and fertility. In Homo sapiens (Human), this protein is Spermatogenesis-associated protein 31G1.